Reading from the N-terminus, the 211-residue chain is C-type lectin domain-containing protein 158 (211 aa).

The signal sequence occupies residues 1–16 (MQKFILSAFVVALVAA).

This chain is C-type lectin domain-containing protein 158 (clec-158), found in Caenorhabditis elegans.